The following is a 495-amino-acid chain: Alpha-1B-glycoprotein (495 aa).

An N-terminal signal peptide occupies residues 1–21 (MSMLVVFLLLWGVTWGPVTEA). Ig-like V-type domains are found at residues 22 to 113 (AIFY…LTGP), 114 to 206 (KSLP…ELAA), 207 to 299 (PPPP…PVEL), 300 to 397 (ILSD…LHVD), and 398 to 495 (GPPP…VAES). Asn-44 carries N-linked (GlcNAc...) (complex) asparagine glycosylation. Disulfide bonds link Cys-49-Cys-93, Cys-139-Cys-182, Cys-232-Cys-279, Cys-325-Cys-374, and Cys-423-Cys-470. Residue Asn-179 is glycosylated (N-linked (GlcNAc...) asparagine). N-linked (GlcNAc...) asparagine glycans are attached at residues Asn-363 and Asn-371.

As to quaternary structure, interacts with CRISP3. In terms of tissue distribution, plasma.

It localises to the secreted. The sequence is that of Alpha-1B-glycoprotein (A1BG) from Homo sapiens (Human).